A 279-amino-acid chain; its full sequence is Large ribosomal subunit protein mL46 (279 aa).

N6-acetyllysine is present on Lys230.

It belongs to the mitochondrion-specific ribosomal protein mL46 family. Component of the mitochondrial ribosome large subunit (39S) which comprises a 16S rRNA and about 50 distinct proteins.

The protein localises to the mitochondrion. The polypeptide is Large ribosomal subunit protein mL46 (MRPL46) (Pongo abelii (Sumatran orangutan)).